We begin with the raw amino-acid sequence, 203 residues long: Dual specificity phosphatase 29 (203 aa).

The region spanning histidine 47–glutamate 193 is the Tyrosine-protein phosphatase domain. Histidine 137 to arginine 144 serves as a coordination point for substrate. Residue cysteine 138 is the Phosphocysteine intermediate of the active site.

This sequence belongs to the protein-tyrosine phosphatase family. Non-receptor class dual specificity subfamily.

Its subcellular location is the cytoplasm. The protein resides in the nucleus. It catalyses the reaction O-phospho-L-tyrosyl-[protein] + H2O = L-tyrosyl-[protein] + phosphate. It carries out the reaction O-phospho-L-seryl-[protein] + H2O = L-seryl-[protein] + phosphate. The enzyme catalyses O-phospho-L-threonyl-[protein] + H2O = L-threonyl-[protein] + phosphate. Functionally, dual specificity phosphatase able to dephosphorylate phosphotyrosine, phosphoserine and phosphothreonine residues within the same substrate, with a preference for phosphotyrosine as a substrate. Involved in the modulation of AMPK and MAPK1/2 signaling pathways. The polypeptide is Dual specificity phosphatase 29 (dusp29) (Oryzias latipes (Japanese rice fish)).